Reading from the N-terminus, the 130-residue chain is Small ribosomal subunit protein uS9 (130 aa).

The disordered stretch occupies residues 105–130 (TRDPRMKERKKYGLKKARRAPQFSKR). The segment covering 111 to 130 (KERKKYGLKKARRAPQFSKR) has biased composition (basic residues).

The protein belongs to the universal ribosomal protein uS9 family.

The sequence is that of Small ribosomal subunit protein uS9 from Acetivibrio thermocellus (strain ATCC 27405 / DSM 1237 / JCM 9322 / NBRC 103400 / NCIMB 10682 / NRRL B-4536 / VPI 7372) (Clostridium thermocellum).